The sequence spans 382 residues: Gap junction alpha-1 protein (382 aa).

The Cytoplasmic segment spans residues 2–23 (GDWSALGKLLDKVQAYSTAGGK). S5 is subject to Phosphoserine. A helical membrane pass occupies residues 24–44 (VWLSVLFIFRILLLGTAVESA). Over 45-76 (WGDEQSAFRCNTQQPGCENVCYDKSFPISHVR) the chain is Extracellular. Cystine bridges form between C54-C192 and C187-C198. Residues 77–97 (FWVLQIIFVSVPTLLYLAHVF) form a helical membrane-spanning segment. Over 98–155 (YVMRKEEKLNKKEEELKVAQTDGVNVEMHLKQIEIKKFKYGIEEHGKVKMRGGLLRTY) the chain is Cytoplasmic. K144 is covalently cross-linked (Glycyl lysine isopeptide (Lys-Gly) (interchain with G-Cter in SUMO)). Residues 156 to 176 (IISILFKSVFEVAFLLIQWYI) traverse the membrane as a helical segment. Topologically, residues 177-207 (YGFSLSAVYTCKRDPCPHQVDCFLSRPTEKT) are extracellular. A helical transmembrane segment spans residues 208–228 (IFIIFMLVVSLVSLALNIIEL). Topologically, residues 229 to 382 (FYVFFKGVKD…SRPRPDDLEI (154 aa)) are cytoplasmic. K237 is covalently cross-linked (Glycyl lysine isopeptide (Lys-Gly) (interchain with G-Cter in SUMO)). The tract at residues 244–382 (SDPYHATTGP…SRPRPDDLEI (139 aa)) is interaction with NOV. At Y247 the chain carries Phosphotyrosine. 3 positions are modified to phosphoserine: S255, S257, and S262. The tract at residues 264 to 382 (KYAYFNGCSS…SRPRPDDLEI (119 aa)) is interaction with UBQLN4. The residue at position 271 (C271) is an S-nitrosocysteine. The residue at position 275 (T275) is a Phosphothreonine. Phosphoserine occurs at positions 306 and 314. Positions 317–332 (QNRMGQAGSTISNSHA) are enriched in polar residues. Residues 317–382 (QNRMGQAGST…SRPRPDDLEI (66 aa)) are disordered. S325 bears the Phosphoserine; by CK1 mark. T326 bears the Phosphothreonine mark. Residues S328 and S330 each carry the phosphoserine; by CK1 modification. S344 and S365 each carry phosphoserine. Residues 362–374 (RPSSRASSRASSR) are compositionally biased toward low complexity. S368 is subject to Phosphoserine; by PKC/PRKCG and PKC/PRKCD. 2 positions are modified to phosphoserine: S369 and S373.

This sequence belongs to the connexin family. Alpha-type (group II) subfamily. A connexon is composed of a hexamer of connexins. Interacts with SGSM3. Interacts with RIC1/CIP150. Interacts with CNST and CSNK1D. Interacts (via C-terminus) with TJP1. Interacts (via C-terminus) with SRC (via SH3 domain). Interacts (not ubiquitinated) with UBQLN4 (via UBA domain). Interacts with NOV. Interacts with TMEM65. Interacts with ANK3/ANKG and PKP2. Post-translationally, phosphorylation at Ser-325, Ser-328 and Ser-330 by CK1 modulates gap junction assembly. Phosphorylated at Ser-368 by PRKCG; phosphorylation induces disassembly of gap junction plaques and inhibition of gap junction activity. Phosphorylation at Ser-368 by PRKCD triggers its internalization into small vesicles leading to proteasome-mediated degradation. In terms of processing, sumoylated with SUMO1, SUMO2 and SUMO3, which may regulate the level of functional Cx43 gap junctions at the plasma membrane. May be desumoylated by SENP1 or SENP2. S-nitrosylation at Cys-271 is enriched at the muscle endothelial gap junction in arteries, it augments channel permeability and may regulate of smooth muscle cell to endothelial cell communication. Post-translationally, acetylated in the developing cortex; leading to delocalization from the cell membrane.

The protein resides in the cell membrane. It localises to the cell junction. Its subcellular location is the gap junction. It is found in the endoplasmic reticulum. Gap junction protein that acts as a regulator of bladder capacity. A gap junction consists of a cluster of closely packed pairs of transmembrane channels, the connexons, through which materials of low MW diffuse from one cell to a neighboring cell. May play a critical role in the physiology of hearing by participating in the recycling of potassium to the cochlear endolymph. Negative regulator of bladder functional capacity: acts by enhancing intercellular electrical and chemical transmission, thus sensitizing bladder muscles to cholinergic neural stimuli and causing them to contract. May play a role in cell growth inhibition through the regulation of NOV expression and localization. Plays an essential role in gap junction communication in the ventricles. The chain is Gap junction alpha-1 protein (GJA1) from Ursus americanus (American black bear).